The primary structure comprises 233 residues: Demethylmenaquinone methyltransferase (233 aa).

Residues threonine 58, aspartate 79, and 106 to 107 (NA) each bind S-adenosyl-L-methionine.

The protein belongs to the class I-like SAM-binding methyltransferase superfamily. MenG/UbiE family.

It catalyses the reaction a 2-demethylmenaquinol + S-adenosyl-L-methionine = a menaquinol + S-adenosyl-L-homocysteine + H(+). The protein operates within quinol/quinone metabolism; menaquinone biosynthesis; menaquinol from 1,4-dihydroxy-2-naphthoate: step 2/2. Functionally, methyltransferase required for the conversion of demethylmenaquinol (DMKH2) to menaquinol (MKH2). The sequence is that of Demethylmenaquinone methyltransferase from Bacillus subtilis (strain 168).